The chain runs to 286 residues: NADPH-dependent 7-cyano-7-deazaguanine reductase (286 aa).

88–90 (VES) is a binding site for substrate. NADPH is bound at residue 90–91 (SK). The active-site Thioimide intermediate is Cys194. Residue Asp201 is the Proton donor of the active site. Position 233–234 (233–234 (HE)) interacts with substrate. An NADPH-binding site is contributed by 262 to 263 (RG).

It belongs to the GTP cyclohydrolase I family. QueF type 2 subfamily. As to quaternary structure, homodimer.

The protein localises to the cytoplasm. The catalysed reaction is 7-aminomethyl-7-carbaguanine + 2 NADP(+) = 7-cyano-7-deazaguanine + 2 NADPH + 3 H(+). The protein operates within tRNA modification; tRNA-queuosine biosynthesis. Catalyzes the NADPH-dependent reduction of 7-cyano-7-deazaguanine (preQ0) to 7-aminomethyl-7-deazaguanine (preQ1). The sequence is that of NADPH-dependent 7-cyano-7-deazaguanine reductase from Colwellia psychrerythraea (strain 34H / ATCC BAA-681) (Vibrio psychroerythus).